A 746-amino-acid polypeptide reads, in one-letter code: Polyphosphate kinase (746 aa).

Residues 1–17 (MRQPNTQAEAQHTQPSV) are compositionally biased toward polar residues. The disordered stretch occupies residues 1 to 60 (MRQPNTQAEAQHTQPSVGSIAAHRPNTVAATVSGLEPDIDADLDAYEESEESQDGGARLP). Residues 37–53 (PDIDADLDAYEESEESQ) show a composition bias toward acidic residues. Residue N102 participates in ATP binding. Mg(2+) is bound by residues R429 and R459. Residue H489 is the Phosphohistidine intermediate of the active site. 3 residues coordinate ATP: Y522, R618, and H646.

Belongs to the polyphosphate kinase 1 (PPK1) family. The cofactor is Mg(2+). In terms of processing, an intermediate of this reaction is the autophosphorylated ppk in which a phosphate is covalently linked to a histidine residue through a N-P bond.

It catalyses the reaction [phosphate](n) + ATP = [phosphate](n+1) + ADP. Catalyzes the reversible transfer of the terminal phosphate of ATP to form a long-chain polyphosphate (polyP). The protein is Polyphosphate kinase of Streptomyces coelicolor (strain ATCC BAA-471 / A3(2) / M145).